Consider the following 121-residue polypeptide: Small ribosomal subunit protein uS13 (121 aa).

Residues 91 to 121 (HRRGLPVRGQNTKNNARTRKGPSKTVAGKKK) are disordered. Residues 106–121 (ARTRKGPSKTVAGKKK) are compositionally biased toward basic residues.

It belongs to the universal ribosomal protein uS13 family. As to quaternary structure, part of the 30S ribosomal subunit. Forms a loose heterodimer with protein S19. Forms two bridges to the 50S subunit in the 70S ribosome.

Its function is as follows. Located at the top of the head of the 30S subunit, it contacts several helices of the 16S rRNA. In the 70S ribosome it contacts the 23S rRNA (bridge B1a) and protein L5 of the 50S subunit (bridge B1b), connecting the 2 subunits; these bridges are implicated in subunit movement. Contacts the tRNAs in the A and P-sites. This is Small ribosomal subunit protein uS13 from Listeria monocytogenes serotype 4b (strain CLIP80459).